Consider the following 257-residue polypeptide: UPF0246 protein Rsph17025_0016 (257 aa).

It belongs to the UPF0246 family.

The sequence is that of UPF0246 protein Rsph17025_0016 from Cereibacter sphaeroides (strain ATCC 17025 / ATH 2.4.3) (Rhodobacter sphaeroides).